Here is a 211-residue protein sequence, read N- to C-terminus: Arginine exporter protein ArgO (211 aa).

The next 6 helical transmembrane spans lie at 1–21 (MFTYYFQGLALGAAMILPLGP), 37–57 (LMIALLCAVSDLLLICAGIFG), 68–88 (LLAIVTWGGVAFLLWYGFGAL), 111–131 (IIITMLAVTWLNPHVYLDTFV), 147–167 (WFALGTISASFLWFFGLALLA), and 182–202 (IINIVVGAVMWFIAFQLAKEG).

This sequence belongs to the LysE/ArgO transporter (TC 2.A.75) family.

The protein localises to the cell inner membrane. The catalysed reaction is L-arginine(in) = L-arginine(out). Involved in the export of arginine. Important to control the intracellular level of arginine and the correct balance between arginine and lysine. The chain is Arginine exporter protein ArgO from Klebsiella pneumoniae (strain 342).